A 477-amino-acid polypeptide reads, in one-letter code: Secreted RxLR effector protein 102 (477 aa).

The N-terminal stretch at 1 to 20 (MRGGYYVLTALFVVASSEIA) is a signal peptide. Positions 48–65 (RFLRESRGVHGNVANEER) match the RxLR-dEER motif. Disordered regions lie at residues 326–345 (SKGQ…TSKG), 351–370 (IKRS…LPSI), 376–401 (SSKS…KRSR), and 433–455 (PRSA…APSS).

Belongs to the RxLR effector family.

Its subcellular location is the secreted. It localises to the host nucleus. Secreted effector that acts as an elicitor that induces cell death in host plant cells. This Plasmopara viticola (Downy mildew of grapevine) protein is Secreted RxLR effector protein 102.